We begin with the raw amino-acid sequence, 223 residues long: CKLF-like MARVEL transmembrane domain-containing protein 5 (223 aa).

Residues 29–213 (FLTSHKGILL…DAFKIYRTEM (185 aa)) form the MARVEL domain. A run of 4 helical transmembrane segments spans residues 35–55 (GILL…FTAS), 56–76 (ISAY…FLFL), 162–182 (FLRC…AVTS), and 186–206 (AAIA…YDAF).

The protein belongs to the chemokine-like factor family. In terms of tissue distribution, highly expressed in the brain.

The protein resides in the membrane. This is CKLF-like MARVEL transmembrane domain-containing protein 5 (CMTM5) from Homo sapiens (Human).